The primary structure comprises 160 residues: Cyclic pyranopterin monophosphate synthase (160 aa).

Substrate-binding positions include 75–77 (MCH) and 115–116 (ME). Residue aspartate 130 is part of the active site.

This sequence belongs to the MoaC family. In terms of assembly, homohexamer; trimer of dimers.

It carries out the reaction (8S)-3',8-cyclo-7,8-dihydroguanosine 5'-triphosphate = cyclic pyranopterin phosphate + diphosphate. It functions in the pathway cofactor biosynthesis; molybdopterin biosynthesis. Catalyzes the conversion of (8S)-3',8-cyclo-7,8-dihydroguanosine 5'-triphosphate to cyclic pyranopterin monophosphate (cPMP). The protein is Cyclic pyranopterin monophosphate synthase of Lysinibacillus sphaericus (strain C3-41).